Here is a 294-residue protein sequence, read N- to C-terminus: Protease HtpX (294 aa).

A run of 2 helical transmembrane segments spans residues 4–24 (IALF…VLSL) and 34–52 (GLLI…VSLM). Zn(2+) is bound at residue His139. Glu140 is an active-site residue. His143 contacts Zn(2+). The next 2 membrane-spanning stretches (helical) occupy residues 158–178 (VVNT…AGFL) and 194–214 (LIYF…ASII). Glu223 serves as a coordination point for Zn(2+).

The protein belongs to the peptidase M48B family. It depends on Zn(2+) as a cofactor.

Its subcellular location is the cell inner membrane. The protein is Protease HtpX of Klebsiella pneumoniae subsp. pneumoniae (strain ATCC 700721 / MGH 78578).